A 2298-amino-acid polypeptide reads, in one-letter code: Protein Ycf2 (2298 aa).

Residue 1637–1644 participates in ATP binding; the sequence is GSIGTGRS.

This sequence belongs to the Ycf2 family.

Its subcellular location is the plastid. The protein localises to the chloroplast stroma. Functionally, probable ATPase of unknown function. Its presence in a non-photosynthetic plant (Epifagus virginiana) and experiments in tobacco indicate that it has an essential function which is probably not related to photosynthesis. The chain is Protein Ycf2 from Lotus japonicus (Lotus corniculatus var. japonicus).